Reading from the N-terminus, the 233-residue chain is MAKKHSKRYQELLKKIDKDVYNLKEAAEKVKELKSAKFDETVELALKLGVDPRHADQMIRGSVVLPHGTGKTVKVAVLAKGAKADEAKEAGADIVGEEEVLEMIQNGNLDFDILIATPDMMGKLGRFGKILGPKGLMPNPKTGTVTMDVAQAVKNAKAGQVNFRVDKKGNMHVGIGKASFDAEKIYENAVAFIEKINKMKPASAKGRYIQNAALSLTMSPSVKLDVNELTEYK.

This sequence belongs to the universal ribosomal protein uL1 family. In terms of assembly, part of the 50S ribosomal subunit.

Its function is as follows. Binds directly to 23S rRNA. The L1 stalk is quite mobile in the ribosome, and is involved in E site tRNA release. Functionally, protein L1 is also a translational repressor protein, it controls the translation of the L11 operon by binding to its mRNA. This is Large ribosomal subunit protein uL1 from Nautilia profundicola (strain ATCC BAA-1463 / DSM 18972 / AmH).